A 341-amino-acid polypeptide reads, in one-letter code: MQQLTIAIDAMGGDFGPQVTVPAAVQALSQFPELKITVIGDRDAISTQLTHLNYIPNSRFSIVHSESVIGNNTQPSKALRHSRGSSMRMAIDMVANKEADACISAGNTGALMGLSRFTLKLLPGVERPALISPLPTKNNQRTWMLDLGANVSCDAETLFQFAVMGSELAEQTLKRKAKVALLNIGEEEIKGNDQIKRCAEMLNQCQDIEFIGYIEGDKLYQGIADVVVCDGFVGNVCLKTSEGVAHLFLDQLKSHLITSKFKQFIAKWLFGDVISCLKGLNPDQYNGASLIGLRGIVVKSHGSADVSAFNNAIKEAVHEVKRQIPNRISDRLEAVLLERHY.

Belongs to the PlsX family. In terms of assembly, homodimer. Probably interacts with PlsY.

It localises to the cytoplasm. The catalysed reaction is a fatty acyl-[ACP] + phosphate = an acyl phosphate + holo-[ACP]. Its pathway is lipid metabolism; phospholipid metabolism. Its function is as follows. Catalyzes the reversible formation of acyl-phosphate (acyl-PO(4)) from acyl-[acyl-carrier-protein] (acyl-ACP). This enzyme utilizes acyl-ACP as fatty acyl donor, but not acyl-CoA. In Aliivibrio fischeri (strain ATCC 700601 / ES114) (Vibrio fischeri), this protein is Phosphate acyltransferase.